The primary structure comprises 1201 residues: Period circadian protein homolog 3 (1201 aa).

Residues 1–50 form a disordered region; sequence MPRGEAPGPGRRGAKDEALGEESGERWSPEFHLQRKLADSSHSEQQDRNR. Residues 13–50 show a composition bias toward basic and acidic residues; that stretch reads GAKDEALGEESGERWSPEFHLQRKLADSSHSEQQDRNR. The Nuclear export signal 1 motif lies at 55 to 64; sequence LIMVVQEMKK. PAS domains follow at residues 121–188 and 262–328; these read IASE…RAQL and YEAP…KVLK. The 44-residue stretch at 337–380 folds into the PAC domain; that stretch reads HSPIRFCTQNGDYIILDSSWSSFVNPWSRKISFIIGRHKVRTSP. Residues 403 to 412 carry the Nuclear export signal 3 motif; sequence LQEQIYKLLL. A CSNK1E binding domain region spans residues 555–760; it reads LKRKCISCTN…SSSNTGSGPR (206 aa). Disordered regions lie at residues 717–788 and 881–923; these read YSYF…FPPA and PSMS…RSSS. The segment covering 721 to 731 has biased composition (polar residues); that stretch reads QGDSTSKQTRS. Positions 729 to 745 match the Nuclear localization signal motif; it reads TRSAGCRKGKHKRKKLP. Residues 733 to 743 show a composition bias toward basic residues; sequence GCRKGKHKRKK. 2 stretches are compositionally biased toward low complexity: residues 767–783 and 881–890; these read AQPCCPSAASSPHTSSP and PSMSSAMSPT. Over residues 900–911 the composition is skewed to basic and acidic residues; that stretch reads QRREEEKWEAQS. The residue at position 919 (Ser919) is a Phosphoserine. The Nuclear export signal 2 signature appears at 925–932; it reads LQLNLLQE. The interval 952-1067 is disordered; it reads TEYCVTGNNG…GSAASGSSDS (116 aa). Polar residues-rich tracts occupy residues 957–976, 983–994, 1001–1012, and 1035–1050; these read TGNNGSESSPATTGALSTGS, SHPTASALSTGS, and TPSHPTATVLSTGSPP. 5 consecutive repeat copies span residues 965–982, 983–1000, 1001–1018, 1019–1036, and 1037–1054. Residues 965 to 1054 form a 5 X 18 AA tandem repeats of S-[HP]-[AP]-T-[AT]-[GST]-[ATV]-L-S-[MT]-G-[LS]-P-P-[MRS]-[EKR]-[NST]-P region; the sequence is SPATTGALST…STGSPPSESP (90 aa). The residue at position 994 (Ser994) is a Phosphoserine. Ser1053 is subject to Phosphoserine. A compositionally biased stretch (low complexity) spans 1053–1067; that stretch reads SPSRTGSAASGSSDS. The segment at 1123 to 1201 is CRY binding domain; sequence ERVKEVVLKE…CGQVLVEDSC (79 aa).

Homodimer. Component of the circadian core oscillator, which includes the CRY proteins, CLOCK or NPAS2, BMAL1 or BMAL2, CSNK1D and/or CSNK1E, TIMELESS and the PER proteins. Interacts directly with PER1, PER2, CRY1, CRY2, and TIMELESS; interaction with CRY1 and CRY2 is weak and not rhythmic. Interacts with FBXW11 and BTRC. Phosphorylation by CSNK1E is weak and appears to require association with PER1 and translocation to the nucleus. In terms of processing, ubiquitinated.

Its subcellular location is the cytoplasm. The protein resides in the nucleus. Originally described as a core component of the circadian clock. The circadian clock, an internal time-keeping system, regulates various physiological processes through the generation of approximately 24 hour circadian rhythms in gene expression, which are translated into rhythms in metabolism and behavior. It is derived from the Latin roots 'circa' (about) and 'diem' (day) and acts as an important regulator of a wide array of physiological functions including metabolism, sleep, body temperature, blood pressure, endocrine, immune, cardiovascular, and renal function. Consists of two major components: the central clock, residing in the suprachiasmatic nucleus (SCN) of the brain, and the peripheral clocks that are present in nearly every tissue and organ system. Both the central and peripheral clocks can be reset by environmental cues, also known as Zeitgebers (German for 'timegivers'). The predominant Zeitgeber for the central clock is light, which is sensed by retina and signals directly to the SCN. The central clock entrains the peripheral clocks through neuronal and hormonal signals, body temperature and feeding-related cues, aligning all clocks with the external light/dark cycle. Circadian rhythms allow an organism to achieve temporal homeostasis with its environment at the molecular level by regulating gene expression to create a peak of protein expression once every 24 hours to control when a particular physiological process is most active with respect to the solar day. Transcription and translation of core clock components (CLOCK, NPAS2, BMAL1, BMAL2, PER1, PER2, PER3, CRY1 and CRY2) plays a critical role in rhythm generation, whereas delays imposed by post-translational modifications (PTMs) are important for determining the period (tau) of the rhythms (tau refers to the period of a rhythm and is the length, in time, of one complete cycle). A diurnal rhythm is synchronized with the day/night cycle, while the ultradian and infradian rhythms have a period shorter and longer than 24 hours, respectively. Disruptions in the circadian rhythms contribute to the pathology of cardiovascular diseases, cancer, metabolic syndromes and aging. A transcription/translation feedback loop (TTFL) forms the core of the molecular circadian clock mechanism. Transcription factors, CLOCK or NPAS2 and BMAL1 or BMAL2, form the positive limb of the feedback loop, act in the form of a heterodimer and activate the transcription of core clock genes and clock-controlled genes (involved in key metabolic processes), harboring E-box elements (5'-CACGTG-3') within their promoters. The core clock genes: PER1/2/3 and CRY1/2 which are transcriptional repressors form the negative limb of the feedback loop and interact with the CLOCK|NPAS2-BMAL1|BMAL2 heterodimer inhibiting its activity and thereby negatively regulating their own expression. This heterodimer also activates nuclear receptors NR1D1, NR1D2, RORA, RORB and RORG, which form a second feedback loop and which activate and repress BMAL1 transcription, respectively. Has a redundant role with the other PER proteins PER1 and PER2 and is not essential for the circadian rhythms maintenance. In contrast, plays an important role in sleep-wake timing and sleep homeostasis probably through the transcriptional regulation of sleep homeostasis-related genes, without influencing circadian parameters. Can bind heme. The polypeptide is Period circadian protein homolog 3 (PER3) (Homo sapiens (Human)).